The sequence spans 166 residues: Probable RNA-binding protein EIF1AD (166 aa).

Residues 5-89 (TKRKHVVKEV…VKAEISFVLC (85 aa)) form the S1-like domain. The Nuclear localization signal motif lies at 6–12 (KRKHVVK). Threonine 33 bears the Phosphothreonine mark. Positions 56 to 65 (KYRKNIWIKR) match the Nuclear localization signal motif. Residues 114–166 (NNNRNRQTQPELPAEPQLSGEESSSEDDSDLFVNTNRRQYRESEEESEEEEAA) are disordered. Residues serine 132, serine 136, serine 137, serine 138, serine 156, and serine 160 each carry the phosphoserine modification. Over residues 156 to 166 (SEEESEEEEAA) the composition is skewed to acidic residues.

This sequence belongs to the EIF1AD family. As to quaternary structure, interacts with GAPDH and STAT1.

It is found in the nucleus. Functionally, plays a role into cellular response to oxidative stress. Decreases cell proliferation. This chain is Probable RNA-binding protein EIF1AD (EIF1AD), found in Pongo abelii (Sumatran orangutan).